The sequence spans 277 residues: Sarcosine/dimethylglycine N-methyltransferase (277 aa).

The protein belongs to the methyltransferase superfamily. As to quaternary structure, monomer.

The catalysed reaction is sarcosine + 2 S-adenosyl-L-methionine = glycine betaine + 2 S-adenosyl-L-homocysteine + 2 H(+). It carries out the reaction sarcosine + S-adenosyl-L-methionine = N,N-dimethylglycine + S-adenosyl-L-homocysteine + H(+). It catalyses the reaction N,N-dimethylglycine + S-adenosyl-L-methionine = glycine betaine + S-adenosyl-L-homocysteine + H(+). The protein operates within amine and polyamine biosynthesis; betaine biosynthesis via glycine pathway; betaine from glycine: step 2/3. It participates in amine and polyamine biosynthesis; betaine biosynthesis via glycine pathway; betaine from glycine: step 3/3. With respect to regulation, inhibited by n-butylic acid and S-adenosyl-L-homocysteine. Its function is as follows. Catalyzes the methylation of sarcosine and dimethylglycine to dimethylglycine and betaine, respectively, with S-adenosylmethionine (AdoMet) acting as the methyl donor. Activity with sarcosine is much weaker than activity with dimethylglycine. This is Sarcosine/dimethylglycine N-methyltransferase from Aphanothece halophytica.